We begin with the raw amino-acid sequence, 192 residues long: Adenylate kinase (192 aa).

10–18 serves as a coordination point for ATP; the sequence is GVPGVGSTT.

It belongs to the archaeal adenylate kinase family. As to quaternary structure, monomer.

It is found in the cytoplasm. It carries out the reaction AMP + ATP = 2 ADP. This is Adenylate kinase (adkA) from Methanocaldococcus jannaschii (strain ATCC 43067 / DSM 2661 / JAL-1 / JCM 10045 / NBRC 100440) (Methanococcus jannaschii).